We begin with the raw amino-acid sequence, 217 residues long: Probable transaldolase (217 aa).

Lys83 acts as the Schiff-base intermediate with substrate in catalysis.

This sequence belongs to the transaldolase family. Type 3B subfamily.

It localises to the cytoplasm. The enzyme catalyses D-sedoheptulose 7-phosphate + D-glyceraldehyde 3-phosphate = D-erythrose 4-phosphate + beta-D-fructose 6-phosphate. It participates in carbohydrate degradation; pentose phosphate pathway; D-glyceraldehyde 3-phosphate and beta-D-fructose 6-phosphate from D-ribose 5-phosphate and D-xylulose 5-phosphate (non-oxidative stage): step 2/3. Functionally, transaldolase is important for the balance of metabolites in the pentose-phosphate pathway. This chain is Probable transaldolase, found in Jannaschia sp. (strain CCS1).